The chain runs to 201 residues: ATP synthase subunit delta (201 aa).

It belongs to the ATPase delta chain family. F-type ATPases have 2 components, F(1) - the catalytic core - and F(0) - the membrane proton channel. F(1) has five subunits: alpha(3), beta(3), gamma(1), delta(1), epsilon(1). F(0) has three main subunits: a(1), b(2) and c(10-14). The alpha and beta chains form an alternating ring which encloses part of the gamma chain. F(1) is attached to F(0) by a central stalk formed by the gamma and epsilon chains, while a peripheral stalk is formed by the delta and b chains.

It is found in the cell inner membrane. Its function is as follows. F(1)F(0) ATP synthase produces ATP from ADP in the presence of a proton or sodium gradient. F-type ATPases consist of two structural domains, F(1) containing the extramembraneous catalytic core and F(0) containing the membrane proton channel, linked together by a central stalk and a peripheral stalk. During catalysis, ATP synthesis in the catalytic domain of F(1) is coupled via a rotary mechanism of the central stalk subunits to proton translocation. In terms of biological role, this protein is part of the stalk that links CF(0) to CF(1). It either transmits conformational changes from CF(0) to CF(1) or is implicated in proton conduction. The protein is ATP synthase subunit delta of Xanthobacter autotrophicus (strain ATCC BAA-1158 / Py2).